The following is an 814-amino-acid chain: Putative E3 ubiquitin-protein ligase RF298 (814 aa).

3 disordered regions span residues 1–51 (MVEK…ASLT), 221–301 (SVSN…TKSA), and 411–441 (ALPANNAPAPVASEKKSGSEPEEKPSVSTKP). Positions 221-231 (SVSNASKSSES) are enriched in low complexity. Residues 289-301 (SVSTASGEGTKSA) show a composition bias toward polar residues. Basic and acidic residues predominate over residues 423–435 (SEKKSGSEPEEKP). Residues 506–710 (ELKALRKEKE…KLKSDSLKIA (205 aa)) adopt a coiled-coil conformation. The segment at 760–800 (CVMCLSEEMSVIFLPCAHQVLCSKCNQLHEKEAMEDCPSCR) adopts an RING-type zinc-finger fold.

It belongs to the RING-type zinc finger family.

It carries out the reaction S-ubiquitinyl-[E2 ubiquitin-conjugating enzyme]-L-cysteine + [acceptor protein]-L-lysine = [E2 ubiquitin-conjugating enzyme]-L-cysteine + N(6)-ubiquitinyl-[acceptor protein]-L-lysine.. It participates in protein modification; protein ubiquitination. This Arabidopsis thaliana (Mouse-ear cress) protein is Putative E3 ubiquitin-protein ligase RF298 (RF298).